Consider the following 176-residue polypeptide: Large ribosomal subunit protein uL15 (176 aa).

Residues 1–13 (MKLNDLRDNEGAR) are compositionally biased toward basic and acidic residues. Disordered stretches follow at residues 1 to 48 (MKLN…AIKG) and 151 to 176 (IPAA…AKAE). Residues 21–35 (RGIGSGKGKTGGRGQ) are compositionally biased toward gly residues. The segment covering 156–176 (PEHEKKAARSEANKKAKAKAE) has biased composition (basic and acidic residues).

This sequence belongs to the universal ribosomal protein uL15 family. Part of the 50S ribosomal subunit.

Functionally, binds to the 23S rRNA. The polypeptide is Large ribosomal subunit protein uL15 (Erythrobacter litoralis (strain HTCC2594)).